The chain runs to 986 residues: Probable serine/threonine-protein kinase DDB_G0272092 (986 aa).

The C2 domain occupies 1-107 (MARKIGSVRI…EYIVDTTKWY (107 aa)). D22, D28, D76, D78, S81, and D84 together coordinate Ca(2+). ANK repeat units follow at residues 137 to 167 (PEKSPFIKAIKDNDTQAIELMMNKAKLDYTI), 171 to 201 (EGTPAIHIAAASNNIPLITMLLKGSDARVSI), 205 to 238 (HGNTPLHLFVQKNVSLNCEDIINKLIERGCGIND), 242 to 274 (LGETALHKACLATVVQKTTIVEQLLQKGAIINH), 278 to 307 (TRDTPLHYAIKVGKVEFVRFFLQNGANVMI), and 312 to 344 (PSRTPLELAKELGNPQIISKVEKVIEISDWLNE). Positions 333–396 (EKVIEISDWL…LRAVRKIKDP (64 aa)) constitute an SAM domain. Over residues 412–438 (HVENDNNNNNNNNNNNNNSQEQCNINN) the composition is skewed to low complexity. Disordered regions lie at residues 412 to 520 (HVEN…SNTT) and 532 to 574 (TTLT…PEGP). A compositionally biased stretch (polar residues) spans 439-448 (DSLGSGNRNS). The segment covering 454 to 464 (QNQNNTLNNNN) has biased composition (low complexity). Positions 465–476 (VESKSTGNLNSL) are enriched in polar residues. Low complexity-rich tracts occupy residues 493 to 520 (NILSPNPIPASSSAPAAPSPVAIGSNTT) and 546 to 571 (TESTTPPQQQQQTTTITPTKTTTVTP). Residues 601-870 (LTYNVLLGTG…ELLKIRDEYN (270 aa)) enclose the Protein kinase domain. ATP-binding positions include 607-615 (LGTGASGKV) and K628. The Proton acceptor role is filled by D722. Low complexity-rich tracts occupy residues 901–913 (DSNNINNNNNNNN) and 928–947 (SNSNLLNNNNNNNNNDSDNN). The segment at 901-986 (DSNNINNNNN…SPMEPKSIKK (86 aa)) is disordered. Polar residues-rich tracts occupy residues 948 to 959 (ISEPATTDSITK) and 969 to 978 (LTRTRSSSSP).

The protein belongs to the protein kinase superfamily. TKL Ser/Thr protein kinase family. It depends on Ca(2+) as a cofactor.

It catalyses the reaction L-seryl-[protein] + ATP = O-phospho-L-seryl-[protein] + ADP + H(+). The catalysed reaction is L-threonyl-[protein] + ATP = O-phospho-L-threonyl-[protein] + ADP + H(+). This is Probable serine/threonine-protein kinase DDB_G0272092 from Dictyostelium discoideum (Social amoeba).